The chain runs to 339 residues: UDP-galactose transporter homolog 1 (339 aa).

At 1 to 4 (MAGS) the chain is on the lumenal side. Residues 5 to 25 (TSSLVICAIGIYATFLTWALV) form a helical membrane-spanning segment. Residues 26–42 (QEPLATRTWPNSMGKFQ) lie on the Cytoplasmic side of the membrane. A helical transmembrane segment spans residues 43–63 (FPNVISLIQASVAMMMGYLYL). Topologically, residues 64–106 (NWKKVEYPPRKMIKDHWKQLMLISFTQSSSGPLATTSLKHVDY) are lumenal. Residues 107 to 127 (LTYMLAKSCKMIPVLLVHLLL) form a helical membrane-spanning segment. Residues 128–136 (YRTPIASQK) lie on the Cytoplasmic side of the membrane. The helical transmembrane segment at 137–157 (KVVALLVSLGVTIFTIGGNDG) threads the bilayer. The Lumenal portion of the chain corresponds to 158 to 174 (KKLKRSFNESGNDNKLQ). The N-linked (GlcNAc...) asparagine glycan is linked to N165. The chain crosses the membrane as a helical span at residues 175 to 192 (GFGLLFSSLFLDGLTNAT). Topologically, residues 193–214 (QDKLLKANKAKEKGKQTLITGA) are cytoplasmic. The chain crosses the membrane as a helical span at residues 215–235 (HLMFTLNLFVILWNILYFIVI). Topologically, residues 236-245 (DCKQWDNAVS) are lumenal. The chain crosses the membrane as a helical span at residues 246-266 (VLTMDPQVWGYLMLYSFCGAM). The Cytoplasmic portion of the chain corresponds to 267–280 (GQCFIFYTLEQFGS). Residues 281 to 303 (LVLIMITVTRKMVSMILSIIVFG) traverse the membrane as a helical segment. The Lumenal segment spans residues 304 to 307 (KSVR). A helical membrane pass occupies residues 308 to 327 (FQQWVGMFIVFGGITWEALN). The Cytoplasmic segment spans residues 328–339 (KKKANIPKAKSA).

The protein belongs to the nucleotide-sugar transporter family. SLC35B subfamily.

It localises to the endoplasmic reticulum membrane. May be involved in specific transport of UDP-Gal from the cytosol to the Golgi lumen. Involved in the maintenance of optimal conditions for the folding of secretory pathway proteins in the endoplasmic reticulum. Overexpression confers resistance to the immunosuppressive drug, leflunomide. This is UDP-galactose transporter homolog 1 (HUT1) from Saccharomyces cerevisiae (strain ATCC 204508 / S288c) (Baker's yeast).